Reading from the N-terminus, the 431-residue chain is Adenylosuccinate synthetase (431 aa).

Residues 12 to 18 (GDEGKGK) and 40 to 42 (GHT) contribute to the GTP site. Catalysis depends on D13, which acts as the Proton acceptor. Mg(2+) contacts are provided by D13 and G40. IMP is bound by residues 13–16 (DEGK), 38–41 (NAGH), T129, R143, Q224, and T239. The Proton donor role is filled by H41. K292 is covalently cross-linked (Isoglutamyl lysine isopeptide (Lys-Gln) (interchain with Q-Cter in protein Pup)). 299–305 (VTTGRAR) serves as a coordination point for substrate. Residue R303 participates in IMP binding. GTP is bound by residues R305, 331–333 (KLD), and 413–415 (GVG).

Belongs to the adenylosuccinate synthetase family. Homodimer. Mg(2+) is required as a cofactor.

It is found in the cytoplasm. The catalysed reaction is IMP + L-aspartate + GTP = N(6)-(1,2-dicarboxyethyl)-AMP + GDP + phosphate + 2 H(+). It participates in purine metabolism; AMP biosynthesis via de novo pathway; AMP from IMP: step 1/2. In terms of biological role, plays an important role in the de novo pathway of purine nucleotide biosynthesis. Catalyzes the first committed step in the biosynthesis of AMP from IMP. In Mycolicibacterium smegmatis (strain ATCC 700084 / mc(2)155) (Mycobacterium smegmatis), this protein is Adenylosuccinate synthetase.